A 245-amino-acid polypeptide reads, in one-letter code: Ribonuclease 3 (245 aa).

Residues Phe-19–Gly-148 enclose the RNase III domain. Glu-61 is a Mg(2+) binding site. Residue Asp-65 is part of the active site. Positions 134 and 137 each coordinate Mg(2+). Glu-137 is an active-site residue. One can recognise a DRBM domain in the interval Asp-174 to Glu-243.

It belongs to the ribonuclease III family. As to quaternary structure, homodimer. It depends on Mg(2+) as a cofactor.

The protein resides in the cytoplasm. It catalyses the reaction Endonucleolytic cleavage to 5'-phosphomonoester.. Digests double-stranded RNA. Involved in the processing of primary rRNA transcript to yield the immediate precursors to the large and small rRNAs (23S and 16S). Processes some mRNAs, and tRNAs when they are encoded in the rRNA operon. Processes pre-crRNA and tracrRNA of type II CRISPR loci if present in the organism. This is Ribonuclease 3 from Bacillus cytotoxicus (strain DSM 22905 / CIP 110041 / 391-98 / NVH 391-98).